We begin with the raw amino-acid sequence, 366 residues long: tRNA/tmRNA (uracil-C(5))-methyltransferase (366 aa).

Positions 190, 218, 223, 239, and 299 each coordinate S-adenosyl-L-methionine. The active-site Nucleophile is the Cys324. Glu358 acts as the Proton acceptor in catalysis.

Belongs to the class I-like SAM-binding methyltransferase superfamily. RNA M5U methyltransferase family. TrmA subfamily.

It carries out the reaction uridine(54) in tRNA + S-adenosyl-L-methionine = 5-methyluridine(54) in tRNA + S-adenosyl-L-homocysteine + H(+). The catalysed reaction is uridine(341) in tmRNA + S-adenosyl-L-methionine = 5-methyluridine(341) in tmRNA + S-adenosyl-L-homocysteine + H(+). Dual-specificity methyltransferase that catalyzes the formation of 5-methyluridine at position 54 (m5U54) in all tRNAs, and that of position 341 (m5U341) in tmRNA (transfer-mRNA). The sequence is that of tRNA/tmRNA (uracil-C(5))-methyltransferase from Salmonella paratyphi C (strain RKS4594).